Consider the following 999-residue polypeptide: MADKVRRQRPRRRVCWALVAVLLADLLALSDTLAVMSVDLGSESMKVAIVKPGVPMEIVLNKESRRKTPVIVTLKENERFFGDSAASMAIKNPKATLRYFQHLLGKQADNPHVALYQARFPEHELTFDPQRQTVHFQISSQLQFSPEEVLGMVLNYSRSLAEDFAEQPIKDAVITVPVFFNQAERRAVLQAARMAGLKVLQLINDNTATALSYGVFRRKDINTTAQNIMFYDMGSGSTVCTIVTYQMVKTKEAGMQPQLQIRGVGFDRTLGGLEMELRLRERLAGLFNEQRKGQRAKDVRENPRAMAKLLREANRLKTVLSANADHMAQIEGLMDDVDFKAKVTRVEFEELCADLFERVPGPVQQALQSAEMSLDEIEQVILVGGATRVPRVQEVLLKAVGKEELGKNINADEAAAMGAVYQAAALSKAFKVKPFVVRDAVVYPILVEFTREVEEEPGIHSLKHNKRVLFSRMGPYPQRKVITFNRYSHDFNFHINYGDLGFLGPEDLRVFGSQNLTTVKLKGVGDSFKKYPDYESKGIKAHFNLDESGVLSLDRVESVFETLVEDSAEEESTLTKLGNTISSLFGGGTTPDAKENGTDTVQEEEESPAEGSKDEPGEQVELKEEAEAPVEDGSQPPPPEPKGDATPEGEKATEKENGDKSEAQKPSEKAEAGPEGVAPAPEGEKKQKPARKRRMVEEIGVELVVLDLPDLPEDKLAQSVQKLQDLTLRDLEKQEREKAANSLEAFIFETQDKLYQPEYQEVSTEEQREEISGKLSAASTWLEDEGVGATTVMLKEKLAELRKLCQGLFFRVEERKKWPERLSALDNLLNHSSMFLKGARLIPEMDQIFTEVEMTTLEKVINETWAWKNATLAEQAKLPATEKPVLLSKDIEAKMMALDREVQYLLNKAKFTKPRPRPKDKNGTRAEPPLNASASDQGEKVIPPAGQTEDAEPISEPEKVETGSEPGDTEPLELGGPGAEPEQKEQSTGQKRPLKNDEL.

A signal peptide spans 1-32 (MADKVRRQRPRRRVCWALVAVLLADLLALSDT). N155, N222, and N515 each carry an N-linked (GlcNAc...) asparagine glycan. S567 is subject to Phosphoserine. The interval 578–694 (GNTISSLFGG…KKQKPARKRR (117 aa)) is disordered. Residue N596 is glycosylated (N-linked (GlcNAc...) asparagine). Composition is skewed to basic and acidic residues over residues 611–626 (GSKD…KEEA) and 641–672 (PKGD…KAEA). N-linked (GlcNAc...) asparagine glycans are attached at residues N830, N862, and N869. Residue K883 is modified to N6-acetyllysine. The tract at residues 909–999 (AKFTKPRPRP…QKRPLKNDEL (91 aa)) is disordered. N-linked (GlcNAc...) asparagine glycosylation is found at N922 and N931. Residues 996-999 (NDEL) carry the Prevents secretion from ER motif.

The protein belongs to the heat shock protein 70 family. In terms of assembly, part of a large chaperone multiprotein complex comprising DNAJB11, HSP90B1, HSPA5, HYOU, PDIA2, PDIA4, PDIA6, PPIB, SDF2L1, UGGT1 and very small amounts of ERP29, but not, or at very low levels, CALR nor CANX. Highly expressed in tissues that contain well-developed endoplasmic reticulum and synthesize large amounts of secretory proteins. Highly expressed in liver and pancreas and lower expression in brain and kidney. Also expressed in macrophages within aortic atherosclerotic plaques, and in breast cancers.

It localises to the endoplasmic reticulum lumen. In terms of biological role, has a pivotal role in cytoprotective cellular mechanisms triggered by oxygen deprivation. Promotes HSPA5/BiP-mediated ATP nucleotide exchange and thereby activates the unfolded protein response (UPR) pathway in the presence of endoplasmic reticulum stress. May play a role as a molecular chaperone and participate in protein folding. The chain is Hypoxia up-regulated protein 1 (HYOU1) from Homo sapiens (Human).